Reading from the N-terminus, the 468-residue chain is 6-phospho-beta-galactosidase (468 aa).

D-galactose 6-phosphate-binding residues include Gln19, His116, Asn159, Glu160, and Asn297. Glu160 serves as the catalytic Proton donor. Residue Glu375 is the Nucleophile of the active site. 4 residues coordinate D-galactose 6-phosphate: Ser428, Trp429, Lys435, and Tyr437.

Belongs to the glycosyl hydrolase 1 family.

The enzyme catalyses a 6-phospho-beta-D-galactoside + H2O = D-galactose 6-phosphate + an alcohol. It functions in the pathway carbohydrate metabolism; lactose degradation; D-galactose 6-phosphate and beta-D-glucose from lactose 6-phosphate: step 1/1. In Streptococcus mutans serotype c (strain ATCC 700610 / UA159), this protein is 6-phospho-beta-galactosidase.